The primary structure comprises 194 residues: Holliday junction branch migration complex subunit RuvA (194 aa).

A domain I region spans residues 1-63 (MFEYMKGMIV…EDEAHLYGFV (63 aa)). Residues 64–142 (DKEELAMFKK…DSQVEYDQNF (79 aa)) form a domain II region. The interval 143 to 146 (FNHE) is flexible linker. The interval 146–194 (ENKNNNEVVDALMALGYTKHEGEQAASAVRDTSLSTEEMIRKALNWLAR) is domain III.

This sequence belongs to the RuvA family. In terms of assembly, homotetramer. Forms an RuvA(8)-RuvB(12)-Holliday junction (HJ) complex. HJ DNA is sandwiched between 2 RuvA tetramers; dsDNA enters through RuvA and exits via RuvB. An RuvB hexamer assembles on each DNA strand where it exits the tetramer. Each RuvB hexamer is contacted by two RuvA subunits (via domain III) on 2 adjacent RuvB subunits; this complex drives branch migration. In the full resolvosome a probable DNA-RuvA(4)-RuvB(12)-RuvC(2) complex forms which resolves the HJ.

The protein localises to the cytoplasm. Its function is as follows. The RuvA-RuvB-RuvC complex processes Holliday junction (HJ) DNA during genetic recombination and DNA repair, while the RuvA-RuvB complex plays an important role in the rescue of blocked DNA replication forks via replication fork reversal (RFR). RuvA specifically binds to HJ cruciform DNA, conferring on it an open structure. The RuvB hexamer acts as an ATP-dependent pump, pulling dsDNA into and through the RuvAB complex. HJ branch migration allows RuvC to scan DNA until it finds its consensus sequence, where it cleaves and resolves the cruciform DNA. In Alkaliphilus metalliredigens (strain QYMF), this protein is Holliday junction branch migration complex subunit RuvA.